The sequence spans 115 residues: Small ribosomal subunit protein uS17 (115 aa).

The protein belongs to the universal ribosomal protein uS17 family. Part of the 30S ribosomal subunit.

In terms of biological role, one of the primary rRNA binding proteins, it binds specifically to the 5'-end of 16S ribosomal RNA. The polypeptide is Small ribosomal subunit protein uS17 (Granulibacter bethesdensis (strain ATCC BAA-1260 / CGDNIH1)).